The following is a 601-amino-acid chain: A-type ATP synthase subunit A (601 aa).

G235–T242 lines the ATP pocket.

The protein belongs to the ATPase alpha/beta chains family. In terms of assembly, has multiple subunits with at least A(3), B(3), C, D, E, F, H, I and proteolipid K(x).

The protein localises to the cell membrane. It carries out the reaction ATP + H2O + 4 H(+)(in) = ADP + phosphate + 5 H(+)(out). Functionally, component of the A-type ATP synthase that produces ATP from ADP in the presence of a proton gradient across the membrane. The A chain is the catalytic subunit. In Thermofilum pendens (strain DSM 2475 / Hrk 5), this protein is A-type ATP synthase subunit A.